Consider the following 469-residue polypeptide: Transcription factor phomD' (469 aa).

The zn(2)-C6 fungal-type DNA-binding region spans 14–41 (CNACNESKVRCSQRKPTCARCERNGVEC). The segment at 49 to 118 (THKDAPPISM…QQKDEAAAAA (70 aa)) is disordered. Positions 82–93 (KANSNSSSNWHM) are enriched in polar residues. A compositionally biased stretch (low complexity) spans 104 to 118 (QQQQQQQKDEAAAAA).

It localises to the nucleus. Its function is as follows. Transcription factor; part of the gene cluster that mediates the biosynthesis of the phomopsins, a group of hexapeptide mycotoxins which infects lupins and causes lupinosis disease in livestock. May play a role in the regulation of the production of phomopsins. The chain is Transcription factor phomD' from Diaporthe leptostromiformis (Lupinosis disease fungus).